We begin with the raw amino-acid sequence, 963 residues long: Trehalose synthase (963 aa).

Asp-60 contacts substrate. Asn-100 contacts Ca(2+). Residues His-101 and Gln-165 each contribute to the substrate site. Ca(2+) is bound at residue Asp-167. Arg-195 lines the substrate pocket. Catalysis depends on Asp-197, which acts as the Nucleophile. Positions 201, 202, and 204 each coordinate Ca(2+). Residue Glu-240 is the Proton donor of the active site. Substrate contacts are provided by His-305 and Asp-306.

This sequence belongs to the glycosyl hydrolase 13 family. TreS subfamily.

The enzyme catalyses D-maltose = alpha,alpha-trehalose. Catalyzes the reversible interconversion of maltose and alpha,alpha-trehalose by transglucosylation. In Thermus thermophilus, this protein is Trehalose synthase (treS).